The chain runs to 294 residues: Protease HtpX (294 aa).

2 consecutive transmembrane segments (helical) span residues 4–24 (ILLFILTNLSVMIIFGIILFI) and 33–53 (FGLIIMSGVFGFGGSIISLLL). Zn(2+) is bound at residue His139. Residue Glu140 is part of the active site. Residue His143 coordinates Zn(2+). The next 2 membrane-spanning stretches (helical) occupy residues 147–167 (GDMITMTLIQGVVNTFVIFLS) and 197–217 (FFISMALEVVFGILASIITFW). Glu223 contacts Zn(2+).

It belongs to the peptidase M48B family. It depends on Zn(2+) as a cofactor.

It localises to the cell membrane. The polypeptide is Protease HtpX (Wigglesworthia glossinidia brevipalpis).